The primary structure comprises 344 residues: Arginine N-succinyltransferase (344 aa).

Leu125 contributes to the succinyl-CoA binding site. Residue His229 is the Proton donor of the active site.

The protein belongs to the arginine N-succinyltransferase family.

The enzyme catalyses succinyl-CoA + L-arginine = N(2)-succinyl-L-arginine + CoA + H(+). It functions in the pathway amino-acid degradation; L-arginine degradation via AST pathway; L-glutamate and succinate from L-arginine: step 1/5. Its function is as follows. Catalyzes the transfer of succinyl-CoA to arginine to produce N(2)-succinylarginine. In Shigella sonnei (strain Ss046), this protein is Arginine N-succinyltransferase.